Reading from the N-terminus, the 502-residue chain is Cyanidin 3-O-glucoside 5-O-glucosyltransferase (acyl-glucose) (502 aa).

The N-terminal stretch at 1 to 30 (MNMSCKFEIVLLVSWWLLLVLVFGVESSMF) is a signal peptide. N-linked (GlcNAc...) asparagine glycosylation is present at Asn2. A beta-D-glucoside-binding positions include Gln52, His150, and 196 to 197 (NE). The active-site Proton donor is the Glu197. Asn303 carries an N-linked (GlcNAc...) asparagine glycan. A beta-D-glucoside is bound by residues Tyr320 and Glu388. Residue Glu388 is the Nucleophile of the active site. N-linked (GlcNAc...) asparagine glycosylation occurs at Asn425. A beta-D-glucoside contacts are provided by Trp435 and Phe451.

The protein belongs to the glycosyl hydrolase 1 family. In terms of tissue distribution, expressed in petals.

It localises to the vacuole. It carries out the reaction cyanidin 3-O-beta-D-glucoside + 1-O-(trans-sinapoyl)-beta-D-glucose = cyanidin 3,5-di-O-beta-D-glucoside + (E)-sinapate. The protein operates within pigment biosynthesis; anthocyanin biosynthesis. In terms of biological role, beta-glycosidase that catalyzes the transfer of glucose moiety to anthocyanidin 3-glucoside at the 5 position. Anthocyanins are ubiquitous colored pigments that are responsible for variations in petal color. Uses acyl-glucoses, but not UDP-glucose, as the glucose donor. The sequence is that of Cyanidin 3-O-glucoside 5-O-glucosyltransferase (acyl-glucose) (AA5GT) from Dianthus caryophyllus (Carnation).